An 815-amino-acid chain; its full sequence is Polyribonucleotide nucleotidyltransferase (815 aa).

Mg(2+) is bound by residues Asp-489 and Asp-495. Residues Pro-556–Ile-615 enclose the KH domain. In terms of domain architecture, S1 motif spans Gly-625–Lys-692. The disordered stretch occupies residues Ala-700 to Gly-815. Gly residues predominate over residues Ala-723–Glu-734. Over residues Gly-735–Glu-745 the composition is skewed to acidic residues. Residues Pro-775–Gly-815 show a composition bias toward gly residues.

This sequence belongs to the polyribonucleotide nucleotidyltransferase family. Requires Mg(2+) as cofactor.

The protein resides in the cytoplasm. It catalyses the reaction RNA(n+1) + phosphate = RNA(n) + a ribonucleoside 5'-diphosphate. Its function is as follows. Involved in mRNA degradation. Catalyzes the phosphorolysis of single-stranded polyribonucleotides processively in the 3'- to 5'-direction. This Koribacter versatilis (strain Ellin345) protein is Polyribonucleotide nucleotidyltransferase.